The primary structure comprises 186 residues: uncharacterized protein (186 aa).

It to M.jannaschii MJ0208.

This is an uncharacterized protein from Methanocaldococcus jannaschii (strain ATCC 43067 / DSM 2661 / JAL-1 / JCM 10045 / NBRC 100440) (Methanococcus jannaschii).